The sequence spans 225 residues: N-(5'-phosphoribosyl)anthranilate isomerase (225 aa).

It belongs to the TrpF family.

The catalysed reaction is N-(5-phospho-beta-D-ribosyl)anthranilate = 1-(2-carboxyphenylamino)-1-deoxy-D-ribulose 5-phosphate. The protein operates within amino-acid biosynthesis; L-tryptophan biosynthesis; L-tryptophan from chorismate: step 3/5. The polypeptide is N-(5'-phosphoribosyl)anthranilate isomerase (Nitrobacter hamburgensis (strain DSM 10229 / NCIMB 13809 / X14)).